The chain runs to 976 residues: Vacuolar membrane protease (976 aa).

Residues 1–15 (MKLKSVFRSVLKYRK) are Cytoplasmic-facing. Residues 16-36 (TNLSLLLLITYSIITLLYIFD) form a helical membrane-spanning segment. The Vacuolar segment spans residues 37-359 (HERYKLNLPK…KFFVISAKTL (323 aa)). N-linked (GlcNAc...) asparagine glycans are attached at residues asparagine 96 and asparagine 121. Residues histidine 156 and aspartate 168 each coordinate Zn(2+). N-linked (GlcNAc...) asparagine glycosylation occurs at asparagine 189. The active-site Proton acceptor is glutamate 200. Glutamate 201 contributes to the Zn(2+) binding site. Asparagine 212 and asparagine 217 each carry an N-linked (GlcNAc...) asparagine glycan. Zn(2+) contacts are provided by glutamate 226 and histidine 300. A helical transmembrane segment spans residues 360 to 380 (FYWNCIFLLVSPVVAIGLYLI). The Cytoplasmic segment spans residues 381–392 (SRDRMTWKSHSW). The chain crosses the membrane as a helical span at residues 393 to 412 (LSWTRFPLSLAAGIIVQKLF). The Vacuolar portion of the chain corresponds to 413 to 428 (SNDIIRSNPLTFSRNY). A helical transmembrane segment spans residues 429–449 (FWPISAFFTQVIFTSYVLINC). Over 450 to 461 (SNFFFPCADMKS) the chain is Cytoplasmic. The helical transmembrane segment at 462 to 482 (LSIIELFIILWTILLFTSKLL) threads the bilayer. The Vacuolar portion of the chain corresponds to 483–496 (YSSDYRYTGLYPLS). A helical membrane pass occupies residues 497 to 517 (IFFLLSTIAAILRLLALALGM). Residues 518–627 (RTRKRLGREC…NSLKLEYTDY (110 aa)) are Cytoplasmic-facing. Positions 528–610 (RDHHSNYSSH…PLLKGSNSME (83 aa)) are disordered. Residues 549 to 558 (NLEQPQDQFT) show a composition bias toward polar residues. The segment covering 559–570 (SSQDDQASIQDD) has biased composition (low complexity). Residues 582–601 (NVDEDHGMDSSSQQHDERVP) are compositionally biased toward basic and acidic residues. The chain crosses the membrane as a helical span at residues 628–648 (AWIIQFLLIVPIPSFILFNSV). The Vacuolar segment spans residues 649-668 (DVIMDALNHTVQEGSKATFD). N-linked (GlcNAc...) asparagine glycosylation is present at asparagine 656. Residues 669–689 (VLRFGMVGSILMALPILPFFY) form a helical membrane-spanning segment. Over 690 to 692 (KVN) the chain is Cytoplasmic. The chain crosses the membrane as a helical span at residues 693-713 (YITISLTALLFLISASKTLLV). Over 714-976 (HPFTNSNPLK…LVIVKDAIIL (263 aa)) the chain is Vacuolar. N-linked (GlcNAc...) asparagine glycosylation is found at asparagine 768, asparagine 796, asparagine 811, asparagine 866, and asparagine 937.

Belongs to the peptidase M28 family. Requires Zn(2+) as cofactor.

The protein localises to the vacuole membrane. May be involved in vacuolar sorting and osmoregulation. In Saccharomyces cerevisiae (strain AWRI1631) (Baker's yeast), this protein is Vacuolar membrane protease.